The primary structure comprises 338 residues: Bifunctional methylenetetrahydrofolate dehydrogenase/cyclohydrolase 2, mitochondrial (338 aa).

Substrate-binding positions include 89 to 93 (YVRNK) and 136 to 138 (VQL). Residues 205 to 207 (GRS) and Arg-238 each bind NAD(+). Residue 314–318 (PGGVG) coordinates substrate.

It belongs to the tetrahydrofolate dehydrogenase/cyclohydrolase family. Mg(2+) serves as cofactor. As to expression, widely expressed.

It is found in the mitochondrion inner membrane. The enzyme catalyses (6R)-5,10-methylene-5,6,7,8-tetrahydrofolate + NAD(+) = (6R)-5,10-methenyltetrahydrofolate + NADH. It carries out the reaction (6R)-5,10-methenyltetrahydrofolate + H2O = (6R)-10-formyltetrahydrofolate + H(+). The catalysed reaction is (6R)-5,10-methylene-5,6,7,8-tetrahydrofolate + NADP(+) = (6R)-5,10-methenyltetrahydrofolate + NADPH. It functions in the pathway one-carbon metabolism; tetrahydrofolate interconversion. Functionally, bifunctional mitochondrial folate-interconverting enzyme that has both NAD/NADP-dependent methylenetetrahydrofolate dehydrogenase and methenyltetrahydrofolate cyclohydrolase activities. In Mus musculus (Mouse), this protein is Bifunctional methylenetetrahydrofolate dehydrogenase/cyclohydrolase 2, mitochondrial.